Consider the following 186-residue polypeptide: Tumor necrosis factor alpha-induced protein 8-like protein 1 (186 aa).

It belongs to the TNFAIP8 family. In terms of assembly, interacts with FBXW5; TNFAIP8L1 competes with TSC2 to bind FBXW5 increasing TSC2 stability by preventing its ubiquitination. High expression detected in most carcinoma cell lines, especially in cells transformed with virus genomes.

It is found in the cytoplasm. Functionally, acts as a negative regulator of mTOR activity. The sequence is that of Tumor necrosis factor alpha-induced protein 8-like protein 1 (TNFAIP8L1) from Homo sapiens (Human).